A 120-amino-acid polypeptide reads, in one-letter code: Ribosome-binding factor A (120 aa).

It belongs to the RbfA family. As to quaternary structure, monomer. Binds 30S ribosomal subunits, but not 50S ribosomal subunits or 70S ribosomes.

Its subcellular location is the cytoplasm. In terms of biological role, one of several proteins that assist in the late maturation steps of the functional core of the 30S ribosomal subunit. Associates with free 30S ribosomal subunits (but not with 30S subunits that are part of 70S ribosomes or polysomes). Required for efficient processing of 16S rRNA. May interact with the 5'-terminal helix region of 16S rRNA. This Chlamydia caviae (strain ATCC VR-813 / DSM 19441 / 03DC25 / GPIC) (Chlamydophila caviae) protein is Ribosome-binding factor A.